The following is a 309-amino-acid chain: Protoheme IX farnesyltransferase (309 aa).

Transmembrane regions (helical) follow at residues 30–49, 53–75, 98–118, 123–143, 151–171, 178–198, 224–244, 247–267, and 285–305; these read VMSL…PGGV, IGFT…NMWY, AGEA…MLGL, VAAG…SMWL, IVIG…AVTG, VLMF…LALF, ILIY…TEVA, VYLI…YDIW, and VFKF…LDAI.

It belongs to the UbiA prenyltransferase family. Protoheme IX farnesyltransferase subfamily. Interacts with CtaA.

The protein resides in the cell inner membrane. It carries out the reaction heme b + (2E,6E)-farnesyl diphosphate + H2O = Fe(II)-heme o + diphosphate. Its pathway is porphyrin-containing compound metabolism; heme O biosynthesis; heme O from protoheme: step 1/1. Functionally, converts heme B (protoheme IX) to heme O by substitution of the vinyl group on carbon 2 of heme B porphyrin ring with a hydroxyethyl farnesyl side group. This Jannaschia sp. (strain CCS1) protein is Protoheme IX farnesyltransferase.